The primary structure comprises 105 residues: Probable tetrachloroethene reductive dehalogenase membrane anchor protein (105 aa).

Transmembrane regions (helical) follow at residues I3–I23, I35–G55, and A66–Y86.

This sequence belongs to the PceB family.

It localises to the cell membrane. May act as a membrane anchor for the tetrachloroethene reductive dehalogenase PceA. The sequence is that of Probable tetrachloroethene reductive dehalogenase membrane anchor protein from Desulfitobacterium hafniense (Desulfitobacterium frappieri).